Here is a 365-residue protein sequence, read N- to C-terminus: MSKIDFRLEKTFGYTTGACAAAGAYSALYFLKNNEKLNFVEILNLKGDSLIIPIKNIEKRGNTAVSTVEKFAGEDIDITNGMDIKIEVILENWDDGYPKPSNVIIIGGTGVGLITKSGLQIKPGDHAINPKPREMIETNLKSLLKDDEYVTVKISVPTGDEIAKKTLNPKLGIVGGISILGTTGIVRPMSNEAYKESLAPQIDVALANNFENLIFVPGNIGTKHAKILLNAEEDQIIEVSNFWDYMLDKAKEKGVKDIMVFGHAGKIVKLAGGIFDTHSRVADARNEILCAYASLVSQDVEMLQKILQSNTTEDIVEILTEKGILSEVFNKVSKRVVERLSLRWEGINFSCIVIDMKGNILGKSD.

It belongs to the CbiD family.

The catalysed reaction is Co-precorrin-5B + S-adenosyl-L-methionine = Co-precorrin-6A + S-adenosyl-L-homocysteine. It participates in cofactor biosynthesis; adenosylcobalamin biosynthesis; cob(II)yrinate a,c-diamide from sirohydrochlorin (anaerobic route): step 6/10. Catalyzes the methylation of C-1 in cobalt-precorrin-5B to form cobalt-precorrin-6A. The polypeptide is Cobalt-precorrin-5B C(1)-methyltransferase (Methanococcus maripaludis (strain C6 / ATCC BAA-1332)).